The primary structure comprises 385 residues: Succinate--CoA ligase [ADP-forming] subunit beta (385 aa).

Residues 9–240 (KEIFAKYGIP…ETQLPQLEVE (232 aa)) form the ATP-grasp domain. Residues Lys46, 53 to 55 (GRG), Glu98, Thr101, and Glu106 each bind ATP. Mg(2+) contacts are provided by Asn195 and Asp209. Substrate is bound by residues Asn260 and 317–319 (GIL).

It belongs to the succinate/malate CoA ligase beta subunit family. As to quaternary structure, heterotetramer of two alpha and two beta subunits. Mg(2+) is required as a cofactor.

It catalyses the reaction succinate + ATP + CoA = succinyl-CoA + ADP + phosphate. The catalysed reaction is GTP + succinate + CoA = succinyl-CoA + GDP + phosphate. It functions in the pathway carbohydrate metabolism; tricarboxylic acid cycle; succinate from succinyl-CoA (ligase route): step 1/1. Succinyl-CoA synthetase functions in the citric acid cycle (TCA), coupling the hydrolysis of succinyl-CoA to the synthesis of either ATP or GTP and thus represents the only step of substrate-level phosphorylation in the TCA. The beta subunit provides nucleotide specificity of the enzyme and binds the substrate succinate, while the binding sites for coenzyme A and phosphate are found in the alpha subunit. The sequence is that of Succinate--CoA ligase [ADP-forming] subunit beta from Aquifex aeolicus (strain VF5).